We begin with the raw amino-acid sequence, 387 residues long: Lipid-A-disaccharide synthase (387 aa).

The protein belongs to the LpxB family.

It carries out the reaction 2-N,3-O-bis[(3R)-3-hydroxytetradecanoyl]-alpha-D-glucosaminyl 1-phosphate + UDP-2-N,3-O-bis[(3R)-3-hydroxytetradecanoyl]-alpha-D-glucosamine = lipid A disaccharide (E. coli) + UDP + H(+). The catalysed reaction is a lipid X + a UDP-2-N,3-O-bis[(3R)-3-hydroxyacyl]-alpha-D-glucosamine = a lipid A disaccharide + UDP + H(+). It participates in glycolipid biosynthesis; lipid IV(A) biosynthesis; lipid IV(A) from (3R)-3-hydroxytetradecanoyl-[acyl-carrier-protein] and UDP-N-acetyl-alpha-D-glucosamine: step 5/6. Condensation of UDP-2,3-diacylglucosamine and 2,3-diacylglucosamine-1-phosphate to form lipid A disaccharide, a precursor of lipid A, a phosphorylated glycolipid that anchors the lipopolysaccharide to the outer membrane of the cell. In Blochmanniella pennsylvanica (strain BPEN), this protein is Lipid-A-disaccharide synthase.